Reading from the N-terminus, the 274-residue chain is Diaminopimelate epimerase (274 aa).

Substrate is bound by residues Asn11, Gln44, and Asn64. Cys73 functions as the Proton donor in the catalytic mechanism. Substrate is bound by residues Gly74–Asn75, Asn157, Asn190, and Glu208–Arg209. Cys217 acts as the Proton acceptor in catalysis. Gly218 to Ser219 serves as a coordination point for substrate.

It belongs to the diaminopimelate epimerase family. In terms of assembly, homodimer.

Its subcellular location is the cytoplasm. The catalysed reaction is (2S,6S)-2,6-diaminopimelate = meso-2,6-diaminopimelate. It functions in the pathway amino-acid biosynthesis; L-lysine biosynthesis via DAP pathway; DL-2,6-diaminopimelate from LL-2,6-diaminopimelate: step 1/1. Functionally, catalyzes the stereoinversion of LL-2,6-diaminopimelate (L,L-DAP) to meso-diaminopimelate (meso-DAP), a precursor of L-lysine and an essential component of the bacterial peptidoglycan. The protein is Diaminopimelate epimerase of Histophilus somni (strain 129Pt) (Haemophilus somnus).